Here is a 600-residue protein sequence, read N- to C-terminus: Integrator complex subunit 11 (600 aa).

Residues His-68, His-70, Asp-72, His-73, His-157, and Asp-178 each coordinate Zn(2+). Positions 68 to 73 (HFHLDH) match the HXHXDH motif motif. Glu-203 is a catalytic residue. A Glycyl lysine isopeptide (Lys-Gly) (interchain with G-Cter in SUMO) cross-link involves residue Lys-381. His-414 provides a ligand contact to Zn(2+). Residues Lys-462 and Lys-475 each participate in a glycyl lysine isopeptide (Lys-Gly) (interchain with G-Cter in SUMO) cross-link. The short motif at 469 to 479 (LLPEAKKPRLL) is the Nuclear localization signal element.

The protein belongs to the metallo-beta-lactamase superfamily. RNA-metabolizing metallo-beta-lactamase-like family. INTS11 subfamily. Component of the Integrator complex, composed of core subunits INTS1, INTS2, INTS3, INTS4, INTS5, INTS6, INTS7, INTS8, INTS9/RC74, INTS10, INTS11/CPSF3L, INTS12, INTS13, INTS14 and INTS15. The core complex associates with protein phosphatase 2A subunits PPP2CA and PPP2R1A, to form the Integrator-PP2A (INTAC) complex. INTS11 is part of the RNA endonuclease subcomplex, composed of INTS4, INTS9, INTS11 and inositol hexakisphosphate (InsP6). Interacts with WDR73; interaction is required for the assembly of the RNA endonuclease subcomplex in the cytoplasm. Interacts with BRAT1; interaction is required for the assembly of the RNA endonuclease subcomplex and inhibits the endonuclease activity of INTS11 before formation of mature integrator complex. Zn(2+) is required as a cofactor. In terms of processing, sumoylated; sumoylation regulates its subcellular location and is required for integrator complex integrity.

The protein localises to the nucleus. It is found in the cytoplasm. With respect to regulation, the RNA endonuclease activity is inhibited by BRAT1 that forms hyrogen bond and hydrophobic interactions with the active site. Functionally, RNA endonuclease component of the integrator complex, a multiprotein complex that terminates RNA polymerase II (Pol II) transcription in the promoter-proximal region of genes. The integrator complex provides a quality checkpoint during transcription elongation by driving premature transcription termination of transcripts that are unfavorably configured for transcriptional elongation: the complex terminates transcription by (1) catalyzing dephosphorylation of the C-terminal domain (CTD) of Pol II subunit POLR2A/RPB1 and SUPT5H/SPT5, (2) degrading the exiting nascent RNA transcript via endonuclease activity and (3) promoting the release of Pol II from bound DNA. The integrator complex is also involved in terminating the synthesis of non-coding Pol II transcripts, such as enhancer RNAs (eRNAs), small nuclear RNAs (snRNAs), telomerase RNAs and long non-coding RNAs (lncRNAs). Within the integrator complex, INTS11 constitutes the RNA endonuclease subunit that degrades exiting nascent RNA transcripts. Mediates recruitment of cytoplasmic dynein to the nuclear envelope, probably as component of the integrator complex. In Pongo abelii (Sumatran orangutan), this protein is Integrator complex subunit 11 (INTS11).